The primary structure comprises 504 residues: Cytochrome P450 2D10 (504 aa).

Ser382 is a glycosylation site (O-linked (GlcNAc) serine). Cys446 serves as a coordination point for heme.

It belongs to the cytochrome P450 family. Heme is required as a cofactor.

Its subcellular location is the endoplasmic reticulum membrane. It is found in the microsome membrane. The enzyme catalyses an organic molecule + reduced [NADPH--hemoprotein reductase] + O2 = an alcohol + oxidized [NADPH--hemoprotein reductase] + H2O + H(+). Cytochromes P450 are a group of heme-thiolate monooxygenases. In liver microsomes, this enzyme is involved in an NADPH-dependent electron transport pathway. It oxidizes a variety of structurally unrelated compounds, including steroids, fatty acids, and xenobiotics. The sequence is that of Cytochrome P450 2D10 (Cyp2d10) from Rattus norvegicus (Rat).